Reading from the N-terminus, the 953-residue chain is Atromentin synthetase invA5 (953 aa).

The segment at 37–460 (SRAVSQYPDH…SGRIKDTVIV (424 aa)) is adenylation (A) domain. The Carrier domain maps to 592-670 (APSTETEKTL…SLAKYVDSLI (79 aa)). Residues 597–667 (TEKTLAGIYA…VISSLAKYVD (71 aa)) are thiolation and peptide carrier (T) domain. An O-(pantetheine 4'-phosphoryl)serine modification is found at serine 629. Residues 693 to 795 (PIFMVHPGVG…FTGLINIPPN (103 aa)) form a thioesterase (TE) domain region.

It belongs to the ATP-dependent AMP-binding enzyme family.

It functions in the pathway secondary metabolite biosynthesis. An L-tyrosine:2-oxoglutarate aminotransferase (probably invD) and atromentin synthetase invA5 catalyze consecutive steps to turn over L-tyrosine into atromentin, which represents the generic precursor molecule for the entire terphenylquinone and pulvinic acid family of pigments, which are widely distributed secondary metabolites in homobasidiomycetes. The first step catalyzed by the aminotransferase converts L-tyrosine in to 4-hydroxyphenylpyruvate (4-HPP). Adenylation of two 4-HPP monomers by the invA5 adenylation (A) domain, covalent tethering of the monomers as a thioester and oxoester onto the invA5 thiolation (T) and thioesterase (TE) domains, respectively, and symmetric C-C-bond formation between two monomers catalyzed by the invA5 TE domain leads to atromentin. This chain is Atromentin synthetase invA5 (invA5), found in Paxillus involutus (Naked brimcap).